The primary structure comprises 263 residues: 3-methyl-2-oxobutanoate hydroxymethyltransferase 2 (263 aa).

Residues aspartate 45 and aspartate 84 each coordinate Mg(2+). 3-methyl-2-oxobutanoate-binding positions include 45 to 46, aspartate 84, and lysine 112; that span reads DS. A Mg(2+)-binding site is contributed by glutamate 114. Residue glutamate 181 is the Proton acceptor of the active site.

Belongs to the PanB family. In terms of assembly, homodecamer; pentamer of dimers. Requires Mg(2+) as cofactor.

Its subcellular location is the cytoplasm. It catalyses the reaction 3-methyl-2-oxobutanoate + (6R)-5,10-methylene-5,6,7,8-tetrahydrofolate + H2O = 2-dehydropantoate + (6S)-5,6,7,8-tetrahydrofolate. It participates in cofactor biosynthesis; (R)-pantothenate biosynthesis; (R)-pantoate from 3-methyl-2-oxobutanoate: step 1/2. In terms of biological role, catalyzes the reversible reaction in which hydroxymethyl group from 5,10-methylenetetrahydrofolate is transferred onto alpha-ketoisovalerate to form ketopantoate. The chain is 3-methyl-2-oxobutanoate hydroxymethyltransferase 2 from Aliivibrio fischeri (strain ATCC 700601 / ES114) (Vibrio fischeri).